Here is a 341-residue protein sequence, read N- to C-terminus: Tetraacyldisaccharide 4'-kinase (341 aa).

Residue 54–61 (TVGGAGKT) coordinates ATP.

This sequence belongs to the LpxK family.

The enzyme catalyses a lipid A disaccharide + ATP = a lipid IVA + ADP + H(+). It functions in the pathway glycolipid biosynthesis; lipid IV(A) biosynthesis; lipid IV(A) from (3R)-3-hydroxytetradecanoyl-[acyl-carrier-protein] and UDP-N-acetyl-alpha-D-glucosamine: step 6/6. Functionally, transfers the gamma-phosphate of ATP to the 4'-position of a tetraacyldisaccharide 1-phosphate intermediate (termed DS-1-P) to form tetraacyldisaccharide 1,4'-bis-phosphate (lipid IVA). This is Tetraacyldisaccharide 4'-kinase from Brucella anthropi (strain ATCC 49188 / DSM 6882 / CCUG 24695 / JCM 21032 / LMG 3331 / NBRC 15819 / NCTC 12168 / Alc 37) (Ochrobactrum anthropi).